A 69-amino-acid polypeptide reads, in one-letter code: ATP synthase F(0) complex subunit 8 (69 aa).

Residues 8–24 (TWLLTITLMILALFCIY) traverse the membrane as a helical segment. Lys55 is subject to N6-acetyllysine; alternate. Lys55 bears the N6-succinyllysine; alternate mark. Lys58 carries the post-translational modification N6-acetyllysine.

The protein belongs to the ATPase protein 8 family. In terms of assembly, component of the ATP synthase complex composed at least of ATP5F1A/subunit alpha, ATP5F1B/subunit beta, ATP5MC1/subunit c (homooctomer), MT-ATP6/subunit a, MT-ATP8/subunit 8, ATP5ME/subunit e, ATP5MF/subunit f, ATP5MG/subunit g, ATP5MK/subunit k, ATP5MJ/subunit j, ATP5F1C/subunit gamma, ATP5F1D/subunit delta, ATP5F1E/subunit epsilon, ATP5PF/subunit F6, ATP5PB/subunit b, ATP5PD/subunit d, ATP5PO/subunit OSCP. ATP synthase complex consists of a soluble F(1) head domain (subunits alpha(3) and beta(3)) - the catalytic core - and a membrane F(0) domain - the membrane proton channel (subunits c, a, 8, e, f, g, k and j). These two domains are linked by a central stalk (subunits gamma, delta, and epsilon) rotating inside the F1 region and a stationary peripheral stalk (subunits F6, b, d, and OSCP). Interacts with PRICKLE3.

It localises to the mitochondrion membrane. Subunit 8, of the mitochondrial membrane ATP synthase complex (F(1)F(0) ATP synthase or Complex V) that produces ATP from ADP in the presence of a proton gradient across the membrane which is generated by electron transport complexes of the respiratory chain. ATP synthase complex consist of a soluble F(1) head domain - the catalytic core - and a membrane F(1) domain - the membrane proton channel. These two domains are linked by a central stalk rotating inside the F(1) region and a stationary peripheral stalk. During catalysis, ATP synthesis in the catalytic domain of F(1) is coupled via a rotary mechanism of the central stalk subunits to proton translocation. In vivo, can only synthesize ATP although its ATP hydrolase activity can be activated artificially in vitro. Part of the complex F(0) domain. The polypeptide is ATP synthase F(0) complex subunit 8 (Osphranter robustus (Wallaroo)).